Consider the following 863-residue polypeptide: Neuroligin-1 (863 aa).

The signal sequence occupies residues 1–45 (MALPRCTWPNYVWRAVMACLVHRGLGAPLTLCMLGCLLQAGHVLS). The Extracellular segment spans residues 46-717 (QKLDDVDPLV…DQRDYSTELS (672 aa)). An N-linked (GlcNAc...) (complex) asparagine glycan is attached at asparagine 109. A disulfide bond links cysteine 117 and cysteine 153. A disordered region spans residues 183-212 (KGGPLTKKQTDDLGDNDGAEDEDIRDSGGP). The span at 194 to 206 (DLGDNDGAEDEDI) shows a compositional bias: acidic residues. N-linked (GlcNAc...) (complex) asparagine glycans are attached at residues asparagine 323 and asparagine 363. Disulfide bonds link cysteine 362/cysteine 373 and cysteine 532/cysteine 566. Asparagine 567 carries N-linked (GlcNAc...) asparagine glycosylation. The disordered stretch occupies residues 670 to 708 (PSTDITFRPTRKNSVPVTSAFPTAKQDDPKQQPSPFSVD). Residues 681 to 690 (KNSVPVTSAF) show a composition bias toward polar residues. Residues serine 703 and serine 706 are each glycosylated (O-linked (GalNAc...) serine). The chain crosses the membrane as a helical span at residues 718 to 738 (VTIAVGASLLFLNILAFAALY). Residues 739–863 (YKKDKRRHDV…HPHSHSTTRV (125 aa)) are Cytoplasmic-facing. Residues 842–863 (GGQNNTLPHPHPHPHSHSTTRV) are disordered. Residues 851 to 863 (PHPHPHSHSTTRV) show a composition bias toward basic residues.

The protein belongs to the type-B carboxylesterase/lipase family. In terms of assembly, interacts with neurexins NRXN1, NRXN2 and NRXN3. Interaction with neurexins is mediated by heparan sulfate glycan modification on neurexin. Interacts with NLGN3. Interacts with AIP1 and PDZRN3. Interacts (via its C-terminus) with DLG4/PSD-95 (via PDZ domain 3). Interacts with GOPC. As to expression, expressed in the blood vessel walls (at protein level). Highly expressed in brain through prenatal stages, and at lower levels in pancreas islet beta cells.

It is found in the cell membrane. The protein resides in the postsynaptic density. The protein localises to the synaptic cleft. It localises to the synaptic cell membrane. Functionally, cell surface protein involved in cell-cell-interactions via its interactions with neurexin family members. Plays a role in synapse function and synaptic signal transmission, and probably mediates its effects by recruiting and clustering other synaptic proteins. May promote the initial formation of synapses, but is not essential for this. In vitro, triggers the de novo formation of presynaptic structures. May be involved in specification of excitatory synapses. Required to maintain wakefulness quality and normal synchrony of cerebral cortex activity during wakefulness and sleep. The protein is involved in nervous system development. In Homo sapiens (Human), this protein is Neuroligin-1 (NLGN1).